We begin with the raw amino-acid sequence, 1336 residues long: Zinc finger protein 335 (1336 aa).

2 disordered regions span residues 1–108 and 199–222; these read MEEN…LVHS and PTST…LAQP. Low complexity-rich tracts occupy residues 31-45 and 54-65; these read TSEA…AATA and SGVGQSSDSGSR. The C2H2-type 1 zinc finger occupies 247-270; that stretch reads FKCKMCQYRSSTKATLLRHMRERH. Disordered stretches follow at residues 282–398 and 415–442; these read AGKR…PSSS and VSQS…GRPS. The span at 300–331 shows a compositional bias: acidic residues; sequence EEGPEEEEEDDDIVDAGAIDDLEEDSDYNPAE. The span at 339–349 shows a compositional bias: low complexity; the sequence is LRLQRPTPSTL. Positions 350–361 are enriched in basic residues; that stretch reads RPRRRPGRPRKL. Basic and acidic residues predominate over residues 362 to 373; that stretch reads PRLETSDLHDGI. Positions 378–387 are enriched in polar residues; that stretch reads VSSQSTQSPP. C2H2-type zinc fingers lie at residues 465–487, 495–517, 523–545, 562–584, 590–612, 621–643, 649–672, and 678–701; these read YLCR…VNSH, FKCL…MFNH, YKCD…AAVH, FPCP…MKTH, HMCD…LLTH, FKCE…QLSH, FKCS…AVKH, and FACE…RCRH. Disordered regions lie at residues 732–766 and 961–1013; these read LKQQ…TPPL and LQCG…AAAS. Residues 752 to 766 show a composition bias toward pro residues; the sequence is PQEPAPFQPPETPPL. Ser975 and Ser1006 each carry phosphoserine. 4 C2H2-type zinc fingers span residues 1018–1040, 1046–1068, 1074–1096, and 1102–1125; these read FSCK…KRAH, FKCP…MAQH, HQCN…MLTH, and FSCH…QRLH. Lys1021 is covalently cross-linked (Glycyl lysine isopeptide (Lys-Gly) (interchain with G-Cter in SUMO2)). Ser1148 carries the phosphoserine modification.

This sequence belongs to the krueppel C2H2-type zinc-finger protein family. As to quaternary structure, interacts with NCOA6; may enhance ligand-dependent transcriptional activation by nuclear hormone receptors. Interacts with CNOT6. Interacts with CNOT9; the interaction is direct. Component of a nuclear receptor-mediated transcription complex composed of at least ZNF335, CCAR2 and EMSY; the complex stimulates the transcription of nuclear receptor target genes such as SOX9 and HOXA1. Within the complex interacts with EMSY and interacts (via C-terminus) with CCAR2. Interacts with members of histone H3'Lys4'(H3K4) methyltransferase complexes ASH2L, CXXC1, KMT2A/MLL1, RBBP5, SETD1A and WDR5. Component of a histone methylation complex composed of at least ZNF335, RBBP5, ASH2L and WDR5; the complex may have histone H3-specific methyltransferase activity, however does not have specificity for 'Lys-4' of histone H3. Interacts with RBBP5 and WDR5. Interacts with ASHL2. Components of this complex may associate with components of the ZNF335-CCAR2-EMSY nuclear receptor-mediated transcription complex to form a complex at least composed of ZNF335, HCFC1, CCAR2, EMSY, MKI67, RBBP5, ASH2L and WDR5. Within this complex also interacts with HCFC1 and MKI67.

It is found in the nucleus. Functionally, component or associated component of some histone methyltransferase complexes may regulate transcription through recruitment of those complexes on gene promoters. Enhances ligand-dependent transcriptional activation by nuclear hormone receptors. Plays an important role in neural progenitor cell proliferation and self-renewal through the regulation of specific genes involved brain development, including REST. Also controls the expression of genes involved in somatic development and regulates, for instance, lymphoblast proliferation. This chain is Zinc finger protein 335 (Znf335), found in Rattus norvegicus (Rat).